We begin with the raw amino-acid sequence, 119 residues long: FAD-linked sulfhydryl oxidase (119 aa).

The 97-residue stretch at 1 to 97 (MLHWGPKYWR…ISWSEYKNIY (97 aa)) folds into the ERV/ALR sulfhydryl oxidase domain. A disulfide bridge links C44 with C47.

Belongs to the asfivirus B119L family. Interacts with A151R. FAD is required as a cofactor.

It localises to the host cytoplasm. The protein resides in the virion. It catalyses the reaction 2 R'C(R)SH + O2 = R'C(R)S-S(R)CR' + H2O2. Its function is as follows. FAD-dependent sulfhydryl oxidase that catalyzes the formation of disulfide bonds in viral proteins produced in the cell cytoplasm. Involved in virion maturation. This African swine fever virus (isolate Warthog/Namibia/Wart80/1980) (ASFV) protein is FAD-linked sulfhydryl oxidase.